Consider the following 447-residue polypeptide: Na(+)-translocating NADH-quinone reductase subunit A (447 aa).

Belongs to the NqrA family. As to quaternary structure, composed of six subunits; NqrA, NqrB, NqrC, NqrD, NqrE and NqrF.

The enzyme catalyses a ubiquinone + n Na(+)(in) + NADH + H(+) = a ubiquinol + n Na(+)(out) + NAD(+). Its function is as follows. NQR complex catalyzes the reduction of ubiquinone-1 to ubiquinol by two successive reactions, coupled with the transport of Na(+) ions from the cytoplasm to the periplasm. NqrA to NqrE are probably involved in the second step, the conversion of ubisemiquinone to ubiquinol. The sequence is that of Na(+)-translocating NADH-quinone reductase subunit A from Tolumonas auensis (strain DSM 9187 / NBRC 110442 / TA 4).